The chain runs to 76 residues: Putative membrane protein insertion efficiency factor (76 aa).

The protein belongs to the UPF0161 family.

The protein resides in the cell inner membrane. In terms of biological role, could be involved in insertion of integral membrane proteins into the membrane. This Paraburkholderia phymatum (strain DSM 17167 / CIP 108236 / LMG 21445 / STM815) (Burkholderia phymatum) protein is Putative membrane protein insertion efficiency factor.